A 215-amino-acid polypeptide reads, in one-letter code: Venom allergen 5.02 (215 aa).

The signal sequence occupies residues 1-10 (PIINLSFGEA). Cystine bridges form between Cys14–Cys26, Cys18–Cys111, Cys36–Cys104, and Cys181–Cys198. The SCP domain occupies 55 to 200 (VNRHNQFRQK…WHTHYLVCNY (146 aa)).

This sequence belongs to the CRISP family. Venom allergen 5-like subfamily. Expressed by the venom gland.

It is found in the secreted. In Dolichovespula maculata (Bald-faced hornet), this protein is Venom allergen 5.02.